We begin with the raw amino-acid sequence, 294 residues long: Elongation factor Ts (294 aa).

An involved in Mg(2+) ion dislocation from EF-Tu region spans residues 81-84 (TDFV).

Belongs to the EF-Ts family.

It localises to the cytoplasm. Associates with the EF-Tu.GDP complex and induces the exchange of GDP to GTP. It remains bound to the aminoacyl-tRNA.EF-Tu.GTP complex up to the GTP hydrolysis stage on the ribosome. The polypeptide is Elongation factor Ts (Lawsonia intracellularis (strain PHE/MN1-00)).